The chain runs to 538 residues: MDLEVKGVAATSRSQIQPFFGRKKPLQQRWTSESWTNQNSCPPVVPRLDLGSLVDSDDEDNFSYIPLSTANLPNSSSTLGWVTPCQTPYTQYHLNKLDQNIIPENLPAPTDKCKLKYQQCKTEIKEGYKQYSQRNAENTKSNVTHKQSPRNKIDEKCVQDEEANTDDLTTLDRKAILQQGYADNSCDKQQRARKLDAEIVAAEKKKQIVAEQVMIDHLSRAVISDPEQNLAIEQKESDHILPDSKMTPLRFRKRTLHETKIRTHSTLTENVLSHKLQFDGRIVSRNGRDACRELIGFFFTHDQSLTIYEYRQFGKNRTNVLPFIQKSIYSHQCGRRKGKQYRLGDFYVGATLTFLSSDHLSLPESIKENTLLKLRITNIDQIALDSLKTASMEQEDDIIIQETNDRLVFKAIQDVLKEKLHKRGVRILTGLGKYFQQLDKEGNGLLDKADFKQALKVFHLEVSEKDFESAWLILNDNGNGKVDYGEFKRGIIGEMNEYRKSYVRKAFMKLDFNKSGSVPIINIRKCYCAKKHSQVISG.

The segment covering 134 to 146 has biased composition (polar residues); sequence RNAENTKSNVTHK. Residues 134 to 154 form a disordered region; the sequence is RNAENTKSNVTHKQSPRNKID. EF-hand domains lie at 426–461, 462–497, and 498–533; these read RILT…FHLE, VSEK…EMNE, and YRKS…KKHS. Residues Asp439, Asn443, Asp450, Asn477, Asn479, Lys481, Glu486, Asp511, Asn513, Ser515, Ser517, and Asn522 each contribute to the Ca(2+) site.

As to expression, abundantly expressed in many tissues. Expressed in brain, colon, heart, kidney, liver, lung, liver, pancreas, placenta, skeletal muscle, testis and thymus. Highest expression in colon, testis, lung, placenta and brain.

The sequence is that of Calcyphosin-2 from Homo sapiens (Human).